Here is a 1099-residue protein sequence, read N- to C-terminus: 1-phosphatidylinositol 4,5-bisphosphate phosphodiesterase 1 (1099 aa).

The span at 1–10 (MLESLNRRNS) shows a compositional bias: basic and acidic residues. Disordered stretches follow at residues 1–109 (MLES…SSTT) and 128–164 (ESRS…KSIQ). Composition is skewed to low complexity over residues 43-66 (PPKS…KSDL) and 86-109 (PKQQ…SSTT). Positions 131-141 (SIVSNNGGSPM) are enriched in polar residues. Residues 142–155 (SDSTTVTSTLSTDT) show a composition bias toward low complexity. The region spanning 566–726 (YDYPLNEYFI…LKHKFIIKVK (161 aa)) is the PI-PLC X-box domain. Catalysis depends on residues H579 and H642. Residues K724 and K726 each coordinate substrate. Residues 742-780 (FTTSTTTTTTTTTTTTTATSLSEDNENNKSNSSSTSSFI) form a disordered region. Over residues 743–778 (TTSTTTTTTTTTTTTTATSLSEDNENNKSNSSSTSS) the composition is skewed to low complexity. In terms of domain architecture, PI-PLC Y-box spans 794 to 912 (ELSNLGIYTQ…GYVLKPSVLR (119 aa)). Substrate-binding residues include S823 and R852. The C2 domain maps to 917-1071 (KSSSSNVDTR…QGYRYIYLND (155 aa)).

The catalysed reaction is a 1,2-diacyl-sn-glycero-3-phospho-(1D-myo-inositol-4,5-bisphosphate) + H2O = 1D-myo-inositol 1,4,5-trisphosphate + a 1,2-diacyl-sn-glycerol + H(+). In terms of biological role, the production of the second messenger molecules diacylglycerol (DAG) and inositol 1,4,5-trisphosphate (IP3) is mediated by activated phosphatidylinositol-specific phospholipase C enzymes. This chain is 1-phosphatidylinositol 4,5-bisphosphate phosphodiesterase 1 (PLC1), found in Candida albicans (Yeast).